Consider the following 113-residue polypeptide: MTEVVGFWESVSDDESEDKDCMEVQNTVSADESPLVQSLVSFVGSCSINLLLPFLNGMMLGFGELFAHELCWRFNWFNHRNKGYKVYPESRKIAALKEISSPGTRGRVASKFL.

The chain crosses the membrane as a helical span at residues 39–62; sequence LVSFVGSCSINLLLPFLNGMMLGF.

The protein belongs to the MIM1 family. As to quaternary structure, component of the MIM complex containing at least MIM1 and MIM2. Interacts with MIM2; interaction is direct. Interacts with TOM70.

Its subcellular location is the mitochondrion outer membrane. Component of the MIM complex required for mitochondrial outer membrane protein import. The MIM complex cooperates with the receptor TOM70 in binding of precursor proteins and promotes their insertion and assembly into the outer membrane. Involved in import of the subset of proteins with multiple alpha-helical transmembrane segments, including UGO1. Required for the assembly of the TOM (translocase of outer membrane) receptor complex, which is responsible for the recognition and translocation of cytosolically synthesized mitochondrial preproteins. Required specifically for assembly of TOM40, TOM20, and TOM70, but not TOM22. This chain is Mitochondrial import protein 1 (MIM1), found in Saccharomyces cerevisiae (strain ATCC 204508 / S288c) (Baker's yeast).